The sequence spans 291 residues: ATP synthase subunit b 2 (291 aa).

Residues 2-22 (LIDGFTVVAQIVNFLILVWLL) traverse the membrane as a helical segment.

Belongs to the ATPase B chain family. As to quaternary structure, F-type ATPases have 2 components, F(1) - the catalytic core - and F(0) - the membrane proton channel. F(1) has five subunits: alpha(3), beta(3), gamma(1), delta(1), epsilon(1). F(0) has three main subunits: a(1), b(2) and c(10-14). The alpha and beta chains form an alternating ring which encloses part of the gamma chain. F(1) is attached to F(0) by a central stalk formed by the gamma and epsilon chains, while a peripheral stalk is formed by the delta and b chains.

The protein resides in the cell inner membrane. Its function is as follows. F(1)F(0) ATP synthase produces ATP from ADP in the presence of a proton or sodium gradient. F-type ATPases consist of two structural domains, F(1) containing the extramembraneous catalytic core and F(0) containing the membrane proton channel, linked together by a central stalk and a peripheral stalk. During catalysis, ATP synthesis in the catalytic domain of F(1) is coupled via a rotary mechanism of the central stalk subunits to proton translocation. In terms of biological role, component of the F(0) channel, it forms part of the peripheral stalk, linking F(1) to F(0). The protein is ATP synthase subunit b 2 of Nitrosospira multiformis (strain ATCC 25196 / NCIMB 11849 / C 71).